A 458-amino-acid chain; its full sequence is tRNA modification GTPase MnmE (458 aa).

Residues Arg-23, Glu-80, and Lys-122 each contribute to the (6S)-5-formyl-5,6,7,8-tetrahydrofolate site. The TrmE-type G domain maps to 218–380 (GMKIVIAGRP…LREHLQQTMG (163 aa)). Residue Asn-228 coordinates K(+). GTP-binding positions include 228-233 (NVGKSS), 247-253 (TQIPGTT), 272-275 (DTAG), and 361-363 (SAR). Ser-232 lines the Mg(2+) pocket. 3 residues coordinate K(+): Thr-247, Ile-249, and Thr-252. Thr-253 serves as a coordination point for Mg(2+). Lys-458 lines the (6S)-5-formyl-5,6,7,8-tetrahydrofolate pocket.

It belongs to the TRAFAC class TrmE-Era-EngA-EngB-Septin-like GTPase superfamily. TrmE GTPase family. Homodimer. Heterotetramer of two MnmE and two MnmG subunits. K(+) serves as cofactor.

The protein localises to the cytoplasm. Exhibits a very high intrinsic GTPase hydrolysis rate. Involved in the addition of a carboxymethylaminomethyl (cmnm) group at the wobble position (U34) of certain tRNAs, forming tRNA-cmnm(5)s(2)U34. In Hamiltonella defensa subsp. Acyrthosiphon pisum (strain 5AT), this protein is tRNA modification GTPase MnmE.